The following is a 716-amino-acid chain: DNA ligase (716 aa).

NAD(+) contacts are provided by residues 47–51 (DATYD), 96–97 (SL), and E130. The active-site N6-AMP-lysine intermediate is the K132. NAD(+)-binding residues include R153, E190, K306, and K330. Zn(2+) is bound by residues C435, C438, C453, and C459. Residues 638 to 716 (RSDSAVAGKT…EDEWLKLIEG (79 aa)) form the BRCT domain.

Belongs to the NAD-dependent DNA ligase family. LigA subfamily. It depends on Mg(2+) as a cofactor. Mn(2+) is required as a cofactor.

It catalyses the reaction NAD(+) + (deoxyribonucleotide)n-3'-hydroxyl + 5'-phospho-(deoxyribonucleotide)m = (deoxyribonucleotide)n+m + AMP + beta-nicotinamide D-nucleotide.. Functionally, DNA ligase that catalyzes the formation of phosphodiester linkages between 5'-phosphoryl and 3'-hydroxyl groups in double-stranded DNA using NAD as a coenzyme and as the energy source for the reaction. It is essential for DNA replication and repair of damaged DNA. The chain is DNA ligase from Nitrobacter winogradskyi (strain ATCC 25391 / DSM 10237 / CIP 104748 / NCIMB 11846 / Nb-255).